The following is a 212-amino-acid chain: Leucine efflux protein (212 aa).

6 consecutive transmembrane segments (helical) span residues 12-32, 49-69, 71-91, 122-142, 153-173, and 188-208; these read TYLV…LFVL, GVFI…ATLI, TTPI…LYLG, ILSL…VQFI, FFIL…FLII, and LAKV…ARLA.

Belongs to the Rht family.

Its subcellular location is the cell inner membrane. It catalyses the reaction L-leucine(in) + H(+)(out) = L-leucine(out) + H(+)(in). In terms of biological role, exporter of leucine. This chain is Leucine efflux protein (leuE), found in Escherichia coli O157:H7.